Consider the following 1036-residue polypeptide: MSLFHVLGFGVKIGHLFWMLCCWFVSWFVDNGIEDKSGLLVGSVGDLEKTKMTTLKKKNKMWFWNKISSSGLKIPSFSYQFLGSVKFNKAWWRKLVVVWVVFWVLVSIWTFWYFSSQAMEKRKETLASMCDERARMLQDQFNVSMNHVQAMSILISTFHHGKIPSAIDQRTFSEYTDRTSFERPLTSGVAYAMRVLHSEREEFERQQGWTIRKMYSLEQNPVHKDDYDLEALEPSPVQEEYAPVIFAQDTVSHVVSLDMLSGKEDRENVLRARSSGKGVLTAPFPLIKTNRLGVILTFAVYKRDLPSNATPKERIEATNGYLGGVFDIESLVENLLQQLASKQTILVNVYDITNHSQPISMYGTNVSADGLERVSPLIFGDPLRKHEMRCRFKQKPPWPVLSMVTSFGILVIALLVAHIIHATVSRIHKVEEDCDKMKQLKKKAEAADVAKSQFLATVSHEIRTPMNGVLGMLHMLMDTELDVTQQDYVRTAQASGKALVSLINEVLDQAKIESGKLELEEVRFDLRGILDDVLSLFSSKSQQKGVELAVYISDRVPDMLIGDPGRFRQILTNLMGNSIKFTEKGHIFVTVHLVDELFESIDGETASSPESTLSGLPVADRQRSWENFKAFSSNGHRSFEPSPPDINLIVSVEDTGVGIPVEAQSRIFTPFMQVGPSISRTHGGTGIGLSISKCLVGLMKGEIGFSSTPKVGSTFTFTAVFSNGMQPAERKNDNNQPIFSEFRGMKAVVVDHRPARAKVSWYHFQRLGIRVEVVPRVEQALHYLKIGTTTVNMILIEQEIWNREADDFIKKLQKDPLFLSPKLILLANSVESSISEALCTGIDPPIVIVKPLRASMLAATLQRGLGIGIREPPQHKGPPALILRNLLLGRKILIVDDNNVNLRVAAGALKKYGADVVCAESGIKAISLLKPPHEFDACFMDIQMPEMDGFEATRRIRDMEEEMNKRIKNGEALIVENGNKTSWHLPVLAMTADVIQATHEECLKCGMDGYVSKPFEAEQLYREVSRFFNSPSDTES.

At 1–8 (MSLFHVLG) the chain is on the extracellular side. The helical transmembrane segment at 9–29 (FGVKIGHLFWMLCCWFVSWFV) threads the bilayer. The Cytoplasmic segment spans residues 30-94 (DNGIEDKSGL…VKFNKAWWRK (65 aa)). A helical membrane pass occupies residues 95–115 (LVVVWVVFWVLVSIWTFWYFS). Over 116–399 (SQAMEKRKET…CRFKQKPPWP (284 aa)) the chain is Extracellular. In terms of domain architecture, CHASE spans 163 to 389 (IPSAIDQRTF…GDPLRKHEMR (227 aa)). The chain crosses the membrane as a helical span at residues 400–420 (VLSMVTSFGILVIALLVAHII). Residues 421-1036 (HATVSRIHKV…FFNSPSDTES (616 aa)) lie on the Cytoplasmic side of the membrane. The Histidine kinase domain occupies 457–723 (TVSHEIRTPM…TFTFTAVFSN (267 aa)). Histidine 460 is subject to Phosphohistidine; by autocatalysis. Response regulatory domains lie at 746-865 (KAVV…QRGL) and 891-1028 (KILI…SRFF). Aspartate 941 carries the post-translational modification 4-aspartylphosphate.

In terms of assembly, interacts with AHK2, AHK4, AHP1, AHP2, AHP3, AHP5 and At5g43560. Autophosphorylated predominantly on His residues. Activation probably requires a transfer of a phosphate group between a His in the transmitter domain and an Asp of the receiver domain. Mostly expressed in leaves and flowers, and, to a lower extent, in roots, stems, and siliques, especially in the vascular tissues. Present in seedlings.

The protein resides in the cell membrane. It localises to the endoplasmic reticulum membrane. It catalyses the reaction ATP + protein L-histidine = ADP + protein N-phospho-L-histidine.. Activated by cytokinins to initiate phosphorelay signaling. This cytokinin-mediated activation is repressed by the trans-zeatin antagonists 6-(2-hydroxy-3-methylbenzylamino)purine (PI-55) and 6-(2,5-Dihydroxybenzylamino)purine (LGR-991). Its function is as follows. Cytokinins (CK) receptor related to bacterial two-component regulators. Functions as a histidine kinase and transmits the stress signal to a downstream MAPK cascade. This protein undergoes an ATP-dependent autophosphorylation at a conserved histidine residue in the kinase core, and a phosphoryl group is then transferred to a conserved aspartate residue in the receiver domain. In the presence of cytokinin, feeds phosphate to phosphorelay-integrating histidine phosphotransfer protein (HPt) and activates subsequent cascade. Involved in meristems establishment in seedlings. Redundant negative regulator of drought and salt stress responses and abscisic acid (ABA) signaling. Together with AHK2, plays a negative regulatory role in cold stress signaling via inhibition of ABA response, occurring independently of the cold acclimation pathway. Redundant positive regulator of cytokinin signaling that regulates many developmental processes including seed germination, cell division, seed size, chlorophyll retention during leaf senescence, root repression and shoot promotion. Can interact with isoprenoid-type cytokinins trans-zeatin (tZ and tZR), cis-zeatin (cZ), dihydrozeatin (DZ), buta-2,3-dienyladenine (HA-8), penta-2,3-dienyladenine (HA-1), 4-methyl-penta-2,3-dienyladenine (HA-10), 4-hydroxy-2-butynyladenine (RM1), 2-propynyladenine (RM3), 2-butynyladenine (RM6), and cytokinin ribosides and ribotides. Together with AHK4, involved in the cytokinin-dependent responses to Pi starvation and sucrose stresses. Promotes cytokinin-mediated leaf longevity through a specific phosphorylation of the response regulator ARR2. Involved in alkamides (e.g. N-isobutyl decanamide) and N-acylethanolamides (NAE) signaling that control meristematic activity and differentiation processes during plant development. Contributes to vascular bundle formation and secondary growth in a cytokinin-dependent manner, probably by promoting the maintenance of mitotic activity and/or identity of procambial cells. Plays a role in the cytokinin-mediated repression of the iron uptake pathway. Required by the cytokinin-dependent flower development regulation pathway. This is Histidine kinase 3 (AHK3) from Arabidopsis thaliana (Mouse-ear cress).